We begin with the raw amino-acid sequence, 375 residues long: MKKVVVGLSGGVDSAVSALLLKKAGYEVEAVFMRNWDSQLNFDFQGNPTLNDVCPQELDYKDALKVSLQLGIKLHRVNFIEEYWQKVFLYFINAFKNNLTPNPDILCNNEIKFKAFINYATSKLKPQYIAMGHYARLIYDKNQKVSLACPLDKNKDQTYFLSQLKTSQLKNILFPLADLTKKEVRKIALENGLINACKKDSTGICFIGERNFFQFLNNYLPAQKGSIKRLDGTFLTYHKGVIHYTIGQRKNLGLGNFSSGQEPFFVVGKNLKTNTLYVEPNSQHPHLYSDRALIIDVTWRGEKTKTQIQAKMRYRQPNQKVTLNWLDANTLEILYPQKIKAVTPGQICAFYDDDICLGAGVIKEVYFQNQKRLYT.

ATP contacts are provided by residues G7–S14 and M33. Residues N102–D104 are interaction with target base in tRNA. The Nucleophile role is filled by C107. A disulfide bond links C107 and C205. An ATP-binding site is contributed by G132. The interaction with tRNA stretch occupies residues K155–Q157. C205 (cysteine persulfide intermediate) is an active-site residue. Residues R313 to Y314 are interaction with tRNA.

The protein belongs to the MnmA/TRMU family.

The protein localises to the cytoplasm. The enzyme catalyses S-sulfanyl-L-cysteinyl-[protein] + uridine(34) in tRNA + AH2 + ATP = 2-thiouridine(34) in tRNA + L-cysteinyl-[protein] + A + AMP + diphosphate + H(+). Its function is as follows. Catalyzes the 2-thiolation of uridine at the wobble position (U34) of tRNA, leading to the formation of s(2)U34. This is tRNA-specific 2-thiouridylase MnmA from Phytoplasma australiense.